The primary structure comprises 284 residues: 2-dehydro-3-deoxyphosphooctonate aldolase (284 aa).

It belongs to the KdsA family.

It localises to the cytoplasm. The enzyme catalyses D-arabinose 5-phosphate + phosphoenolpyruvate + H2O = 3-deoxy-alpha-D-manno-2-octulosonate-8-phosphate + phosphate. It participates in carbohydrate biosynthesis; 3-deoxy-D-manno-octulosonate biosynthesis; 3-deoxy-D-manno-octulosonate from D-ribulose 5-phosphate: step 2/3. Its pathway is bacterial outer membrane biogenesis; lipopolysaccharide biosynthesis. The chain is 2-dehydro-3-deoxyphosphooctonate aldolase from Yersinia enterocolitica serotype O:8 / biotype 1B (strain NCTC 13174 / 8081).